The primary structure comprises 304 residues: Killer cell immunoglobulin-like receptor 2DS2 (304 aa).

Residues 1–21 form the signal peptide; that stretch reads MSLMVVSMACVGFFLLQGAWP. At 22-245 the chain is on the extracellular side; it reads HEGVHRKPSL…SKTGNPRHLH (224 aa). Ig-like C2-type domains are found at residues 42–107 and 142–205; these read EETV…VTHS and GESV…FRDS. 2 cysteine pairs are disulfide-bonded: Cys-49–Cys-100 and Cys-149–Cys-198. N-linked (GlcNAc...) asparagine glycans are attached at residues Asn-84, Asn-178, and Asn-211. Residues 220-239 form a disordered region; that stretch reads VTGNPSNSWPSPTEPSSKTG. Residues 246-265 form a helical membrane-spanning segment; it reads VLIGTSVVKIPFTILLFFLL. Over 266-304 the chain is Cytoplasmic; that stretch reads HRWCSNKKNAAVMDQEPAGNRTVNSEDSDEQDHQEVSYA. The disordered stretch occupies residues 280–304; that stretch reads QEPAGNRTVNSEDSDEQDHQEVSYA.

The protein belongs to the immunoglobulin superfamily.

It is found in the cell membrane. Receptor on natural killer (NK) cells for HLA-C alleles. Does not inhibit the activity of NK cells. In Homo sapiens (Human), this protein is Killer cell immunoglobulin-like receptor 2DS2.